The chain runs to 92 residues: Protease inhibitors (92 aa).

Positions 1–19 are cleaved as a signal peptide; that stretch reads MKFALALCAAVLLVVLVQA. Pacifastin domains follow at residues 20-54 and 57-92; these read EEKCTPGQVKQQDCNTCTCTPTGVWGCTRKGCQPA and EISCEPGKTFKDKCNTCRCGADGKSAACTLKACPNQ. 6 disulfide bridges follow: cysteine 23/cysteine 38, cysteine 33/cysteine 51, cysteine 36/cysteine 46, cysteine 60/cysteine 75, cysteine 70/cysteine 89, and cysteine 73/cysteine 84. An O-linked (Fuc) threonine glycan is attached at threonine 65.

It belongs to the protease inhibitor I19 family. Brain and fat body.

The protein localises to the secreted. Its function is as follows. Both LCMI I and II are inhibitors of chymotrypsin and elastase (in vitro). They both inhibit the prophenol oxidase activation cascade. In Locusta migratoria (Migratory locust), this protein is Protease inhibitors.